The sequence spans 597 residues: Arginine--tRNA ligase (597 aa).

The short motif at 124 to 134 (PNVAKPLHVGH) is the 'HIGH' region element.

The protein belongs to the class-I aminoacyl-tRNA synthetase family. Monomer.

The protein resides in the cytoplasm. The catalysed reaction is tRNA(Arg) + L-arginine + ATP = L-arginyl-tRNA(Arg) + AMP + diphosphate. The polypeptide is Arginine--tRNA ligase (Agathobacter rectalis (strain ATCC 33656 / DSM 3377 / JCM 17463 / KCTC 5835 / VPI 0990) (Eubacterium rectale)).